The primary structure comprises 204 residues: UPF0637 protein SAR1080 (204 aa).

It belongs to the UPF0637 family.

This Staphylococcus aureus (strain MRSA252) protein is UPF0637 protein SAR1080.